The following is an 89-amino-acid chain: Small ribosomal subunit protein uS17 (89 aa).

The protein belongs to the universal ribosomal protein uS17 family. As to quaternary structure, part of the 30S ribosomal subunit.

One of the primary rRNA binding proteins, it binds specifically to the 5'-end of 16S ribosomal RNA. This Polaromonas sp. (strain JS666 / ATCC BAA-500) protein is Small ribosomal subunit protein uS17.